The sequence spans 49 residues: Large ribosomal subunit protein bL33 (49 aa).

It belongs to the bacterial ribosomal protein bL33 family.

The protein is Large ribosomal subunit protein bL33 of Caldanaerobacter subterraneus subsp. tengcongensis (strain DSM 15242 / JCM 11007 / NBRC 100824 / MB4) (Thermoanaerobacter tengcongensis).